The following is a 216-amino-acid chain: ATP-dependent Clp protease proteolytic subunit 1 (216 aa).

Ser119 serves as the catalytic Nucleophile. Residue His144 is part of the active site.

Belongs to the peptidase S14 family. Fourteen ClpP subunits assemble into 2 heptameric rings which stack back to back to give a disk-like structure with a central cavity, resembling the structure of eukaryotic proteasomes.

Its subcellular location is the cytoplasm. The enzyme catalyses Hydrolysis of proteins to small peptides in the presence of ATP and magnesium. alpha-casein is the usual test substrate. In the absence of ATP, only oligopeptides shorter than five residues are hydrolyzed (such as succinyl-Leu-Tyr-|-NHMec, and Leu-Tyr-Leu-|-Tyr-Trp, in which cleavage of the -Tyr-|-Leu- and -Tyr-|-Trp bonds also occurs).. Cleaves peptides in various proteins in a process that requires ATP hydrolysis. Has a chymotrypsin-like activity. Plays a major role in the degradation of misfolded proteins. This chain is ATP-dependent Clp protease proteolytic subunit 1, found in Cutibacterium acnes (strain DSM 16379 / KPA171202) (Propionibacterium acnes).